A 917-amino-acid polypeptide reads, in one-letter code: Intercellular adhesion molecule 5 (917 aa).

The first 31 residues, 1–31, serve as a signal peptide directing secretion; that stretch reads MPGPSPGLRRALLGLWAALGLGILGISAVAL. At 32-833 the chain is on the extracellular side; that stretch reads EPFWADLQPR…RITVRVAGPW (802 aa). Ig-like C2-type domains follow at residues 48–130, 135–235, 242–329, 337–402, 408–486, 491–567, 572–651, 665–738, and 745–828; these read GGSL…PLPS, GENF…SLIA, DSER…LLTL, GKMV…SSEL, PRLD…VTLT, PALD…VAVT, PSFE…NRHG, PQMD…RTVT, and PVVA…ITVR. A glycan (N-linked (GlcNAc...) (high mannose) asparagine) is linked at N54. 2 disulfide bridges follow: C55-C99 and C59-C103. N-linked (GlcNAc...) asparagine glycosylation is found at N74 and N137. The cysteines at positions 142 and 198 are disulfide-linked. Position 182 is a phosphothreonine (T182). N-linked (GlcNAc...) asparagine glycans are attached at residues N195, N214, N274, N316, N371, and N397. A disulfide bond links C249 and C302. The cysteines at positions 344 and 383 are disulfide-linked. 3 cysteine pairs are disulfide-bonded: C415/C470, C498/C551, and C579/C644. 2 N-linked (GlcNAc...) asparagine glycosylation sites follow: N582 and N645. C672 and C724 are oxidised to a cystine. N-linked (GlcNAc...) asparagine glycosylation is found at N762, N793, and N794. C767 and C812 are oxidised to a cystine. A helical membrane pass occupies residues 834–854; that stretch reads LWVAVGGAAGGAALLAAGAGL. Residues 855-917 are Cytoplasmic-facing; that stretch reads AFYVQSTACK…EVFAIQLTSS (63 aa). Over residues 884 to 893 the composition is skewed to gly residues; it reads GAGGTPGAEG. The tract at residues 884–908 is disordered; it reads GAGGTPGAEGGAETPGTAESPADGE.

The protein belongs to the immunoglobulin superfamily. ICAM family. Glycosylation at Asn-54 is critical for functional folding. As to expression, expressed on neurons in the most rostral segment of the mammalian brain, the telencephalon.

It localises to the membrane. ICAM proteins are ligands for the leukocyte adhesion protein LFA-1 (integrin alpha-L/beta-2). The polypeptide is Intercellular adhesion molecule 5 (Icam5) (Mus musculus (Mouse)).